The primary structure comprises 230 residues: DNA repair protein RecO (230 aa).

The protein belongs to the RecO family.

Functionally, involved in DNA repair and RecF pathway recombination. The sequence is that of DNA repair protein RecO from Pseudoalteromonas translucida (strain TAC 125).